A 1462-amino-acid chain; its full sequence is MPNIFLSNYIFIFILLTNKFLKTFDYVESKHWNNICLKDLYDKNDIKLNKTNKLKLKYKNFMFSDLKKQKKRKETETATGTITQKQKHTKKKKLHGQTNGYFIKRNKIQHIFANIPYNNNFKKINQDIYTFKNVNYHPKNANKKVYLKINNATHLETIKTYITKCIKNYRHQNEEKTQKKIRNYNNIIQYYVSRKNNNNNNNNRFIHTYNMLFINIFYNIISKNRNEKKKKNRKTDFQKYLRKYEELYQKFTPENDAENNDINNDKNNSDLISQINKKNISNIIINEWCLRNNNEKYNSTLMYDYISNMHNTEYQDITCVNNFIKNNEMIEKETWEHKQKPYLTYKYEFKYRDPINRKNKLYQYEYYIPKLITYEEDISTEPKFVPSNFKSPKCYNNSPVNALTTSGFSSRNIDTFGKERNKIYSFNTPTDVKRNIFFDDLILISSSYNQHFFPNLNFLLNLHTLQILIRDKTAIETDYMIDKFDQLKEKLIQINSPHVIDNNQNDDIDNNNNNNNNNNNCDNPYNKRIIPINNKSTNNDACTIDNISNIQHRKNQTNDQNNKSKDDEINEEISSNLTYKKTLFDDKIQLFKNKYDKNILDDKDFVQLWKYNEKGEIVETINKIPIPKIYLNIDDPKYLSWKILQNSGKTAFKEIPTPNRKLEAWRQQVNLKTFYKQNFDSSISLRNISKEELVDYKMKIVDNTFEKNEKVQNDISDHFDNIKMDNQQNEEKVELNENINYYNSDNINGDNINGDNINGDNINGDNINGDNINGDNINGDNINGDNINGDNINGDNINGDNINDDNINDDNINDVNNNHNNNHNSDNHYYYGDTHKINNQNKKNVNETINISENTNMDDNNNNEIYSQNYKEQRIKNQDISNNAYNFNKEHIDKCKRKYKKAFYTLVVRDGIVDEYLSDDINILKNLDNKLKKKSEINQNKENENENENNSQSDNNTTKQHIQDEQGTEQKKSKIFVGSFFNVKDVEIEYLINKELYFIPEHSNWYKTNTQPFIRGQIGKQSRKFDNDYPIYDYRKSDFGMAKFSSLNLASIKDCAVVYLDENIDLSDKFIHVIFIATSKNEDIDNNNNNNDNNNDNDIYEKQSKYNVYENIPSNNKQTNSNNNSEYNNEQNNCSNKQITNDEQNDNEYEKEESIQKCHMEKVISSHDDTIQNCDIEKNECKENKKSKYTQIKLTEYHTHNPITNPRLVVYVKGNSKINIYESHISLNKSNSGLVNGFSRICLEEKSNVKHTLSQELGNNVWHFHNVSVKNGLNANYKFVDVLLGSLSSRINLQIEGEKGCKQESYGLSLLEDKQNISQYEMFHHEHPSMETNQLFKCLVSDKAHAVWRSRGRIERNAIKAKLNTLCKSILLNFGASAVCIPTLEIIPSDIECANHGATISDLEKEPIFSLMTRGISERNAREIMMNSFVKEILDHISDENLKNRVYQKVLKFSQKYKSSTY.

Disordered regions lie at residues 500 to 525 (IDNNQNDDIDNNNNNNNNNNNCDNPY), 938 to 970 (NQNKENENENENNSQSDNNTTKQHIQDEQGTEQ), and 1111 to 1153 (NIPS…EKEE). The segment covering 510–523 (NNNNNNNNNNNCDN) has biased composition (low complexity). Over residues 961 to 970 (HIQDEQGTEQ) the composition is skewed to basic and acidic residues. Positions 1111–1136 (NIPSNNKQTNSNNNSEYNNEQNNCSN) are enriched in low complexity.

It belongs to the iron-sulfur cluster assembly SufBD family. In terms of assembly, component of a complex composed of SufB, SufC and SufD in a stoichiometric ratio of 1:2:1. Interacts with SufB. Interacts with SufC; the interaction enhances the ATPase activity of SufC. Proteolytically cleaved.

The protein localises to the plastid. It is found in the apicoplast. It functions in the pathway cofactor biosynthesis; iron-sulfur cluster biosynthesis. Participates in the sulfur mobilization (SUF) pathway for iron-sulfur (Fe-S) cluster biogenesis. As part of a complex consisting of SufB-SufC(2)-SufD, involved in assembly of [4Fe-4S] clusters. Enhances the ATPase activity of SufC. The sequence is that of Iron-sulfur cluster assembly protein SufD from Plasmodium falciparum (isolate 3D7).